The following is a 263-amino-acid chain: 3-methyl-2-oxobutanoate hydroxymethyltransferase (263 aa).

Mg(2+) contacts are provided by Asp45 and Asp84. 3-methyl-2-oxobutanoate-binding positions include 45–46, Asp84, and Lys112; that span reads DS. Residue Glu114 coordinates Mg(2+). The active-site Proton acceptor is the Glu180.

Belongs to the PanB family. Homodecamer; pentamer of dimers. Mg(2+) is required as a cofactor.

It is found in the cytoplasm. It catalyses the reaction 3-methyl-2-oxobutanoate + (6R)-5,10-methylene-5,6,7,8-tetrahydrofolate + H2O = 2-dehydropantoate + (6S)-5,6,7,8-tetrahydrofolate. The protein operates within cofactor biosynthesis; (R)-pantothenate biosynthesis; (R)-pantoate from 3-methyl-2-oxobutanoate: step 1/2. Functionally, catalyzes the reversible reaction in which hydroxymethyl group from 5,10-methylenetetrahydrofolate is transferred onto alpha-ketoisovalerate to form ketopantoate. This Salmonella paratyphi C (strain RKS4594) protein is 3-methyl-2-oxobutanoate hydroxymethyltransferase.